A 375-amino-acid polypeptide reads, in one-letter code: Enoyl-[acyl-carrier-protein] reductase [NADH] 1, chloroplastic (375 aa).

A chloroplast-targeting transit peptide spans 1-67 (MGASAATGMQ…SSKRSGVAIR (67 aa)). NAD(+)-binding positions include Gly91, Tyr98, 155-156 (DA), 202-203 (SL), and Leu252. Catalysis depends on proton acceptor residues Tyr254 and Tyr264. Residues Lys272 and 302–306 (LGSRA) each bind NAD(+).

It belongs to the short-chain dehydrogenases/reductases (SDR) family. FabI subfamily. As to quaternary structure, homotetramer.

Its subcellular location is the plastid. It localises to the chloroplast. It catalyses the reaction a 2,3-saturated acyl-[ACP] + NAD(+) = a (2E)-enoyl-[ACP] + NADH + H(+). Its pathway is lipid metabolism; fatty acid biosynthesis. Functionally, catalyzes the NAD-dependent reduction of a carbon-carbon double bond in an enoyl moiety that is covalently linked to an acyl carrier protein (ACP). Catalyzes the last reduction step in the de novo synthesis cycle of fatty acids. Involved in the elongation cycle of fatty acids which are used in lipid metabolism. Required for normal plant growth. The chain is Enoyl-[acyl-carrier-protein] reductase [NADH] 1, chloroplastic from Oryza sativa subsp. japonica (Rice).